The primary structure comprises 155 residues: 3-dehydroquinate dehydratase (155 aa).

The active-site Proton acceptor is the Y22. Positions 73, 79, and 86 each coordinate substrate. H99 serves as the catalytic Proton donor. Residues 100–101 (IS) and R110 contribute to the substrate site.

It belongs to the type-II 3-dehydroquinase family. In terms of assembly, homododecamer.

The catalysed reaction is 3-dehydroquinate = 3-dehydroshikimate + H2O. It participates in metabolic intermediate biosynthesis; chorismate biosynthesis; chorismate from D-erythrose 4-phosphate and phosphoenolpyruvate: step 3/7. Functionally, catalyzes a trans-dehydration via an enolate intermediate. This is 3-dehydroquinate dehydratase from Campylobacter hominis (strain ATCC BAA-381 / DSM 21671 / CCUG 45161 / LMG 19568 / NCTC 13146 / CH001A).